We begin with the raw amino-acid sequence, 461 residues long: uncharacterized protein (461 aa).

This is an uncharacterized protein from Saccharomyces cerevisiae (strain ATCC 204508 / S288c) (Baker's yeast).